The sequence spans 377 residues: Histone deacetylase 8 (377 aa).

Positions 14–324 (LPPVYIYSPE…WTYLTGVILG (311 aa)) are histone deacetylase. S39 carries the post-translational modification Phosphoserine. D101 is a binding site for substrate. H143 serves as the catalytic Proton acceptor. G151 contributes to the substrate binding site. The a divalent metal cation site is built by D178, H180, and D267. Y306 is a binding site for substrate.

The protein belongs to the histone deacetylase family. HD type 1 subfamily. As to quaternary structure, interacts with CBFA2T3. Interacts with phosphorylated SMG5/EST1B; this interaction protects SMG5 from ubiquitin-mediated degradation. Associates with alpha-SMA (smooth muscle alpha-actin). Requires a divalent metal cation as cofactor. In terms of processing, phosphorylated by PKA on serine 39. Phosphorylation reduces deacetylase activity observed preferentially on histones H3 and H4.

Its subcellular location is the nucleus. The protein resides in the chromosome. It is found in the cytoplasm. It carries out the reaction N(6)-acetyl-L-lysyl-[histone] + H2O = L-lysyl-[histone] + acetate. It catalyses the reaction N(6)-acetyl-L-lysyl-[protein] + H2O = L-lysyl-[protein] + acetate. The enzyme catalyses N(6)-(2E)-butenoyl-L-lysyl-[protein] + H2O = (2E)-2-butenoate + L-lysyl-[protein]. Its activity is inhibited by trichostatin A (TSA) and butyrate, 2 well known histone deacetylase inhibitors. Histone deacetylase that catalyzes the deacetylation of lysine residues on the N-terminal part of the core histones (H2A, H2B, H3 and H4). Histone deacetylation gives a tag for epigenetic repression and plays an important role in transcriptional regulation, cell cycle progression and developmental events. Histone deacetylases act via the formation of large multiprotein complexes. Also involved in the deacetylation of cohesin complex protein SMC3 regulating release of cohesin complexes from chromatin. May play a role in smooth muscle cell contractility. In addition to protein deacetylase activity, also has protein-lysine deacylase activity: acts as a protein decrotonylase by mediating decrotonylation ((2E)-butenoyl) of histones. This Bos taurus (Bovine) protein is Histone deacetylase 8 (HDAC8).